We begin with the raw amino-acid sequence, 183 residues long: MSNTGSAVPQTTSSNPIVFFDVALGGEPLGRLKLELFADVTPRTAENFRQFCTGESKNQQGRPQGYKGSKFHRVIKDFMIQGGDFVNGDGTGSCTIYGTPKFSDENFTLRHDRPGLLSMANSGPNTNGCQFFITTTATPFLNGKHVVFGQVIDGMDIVRMIENTRTTRDKPNQDVVIIQCGEM.

A PPIase cyclophilin-type domain is found at 19-182; it reads FFDVALGGEP…QDVVIIQCGE (164 aa).

The protein belongs to the cyclophilin-type PPIase family. PPIase H subfamily.

The protein resides in the nucleus. It catalyses the reaction [protein]-peptidylproline (omega=180) = [protein]-peptidylproline (omega=0). PPIases accelerate the folding of proteins. It catalyzes the cis-trans isomerization of proline imidic peptide bonds in oligopeptides. The polypeptide is Peptidyl-prolyl cis-trans isomerase H (cyp3) (Emericella nidulans (strain FGSC A4 / ATCC 38163 / CBS 112.46 / NRRL 194 / M139) (Aspergillus nidulans)).